The primary structure comprises 431 residues: MLDIQLLRSNTAAVAERLARRGYDFDTARFDALEERRKSVQVKTEELQASRNSISKQIGALKGQGKHEEAQAAMDQVAQIKTDLEQAAADLDAVQKELDAWLLSIPNLPHESVPPGKDETENVEVRKVGTPREFDFEIKDHVDLGEPLGLDFEGGAKLSGARFTVMRGQIARLHRALAQFMLDTHMLQHGYTEHYTPYIVDDTTLQGTGQLPKFAEDLFHVTRGGDETKTTQYLIPTAEVTLTNTVAGSIIPSEQLPLKLTAHSPCFRSEAGSYGKDTRGLIRQHQFDKVEMVQIVHPEKSYGALEEMVGHAENILKALELPYRVITLCTGDMGFSAAKTYDLEVWVPAQNTYREISSCSNCEDFQARRMKARFKDENGKNRLVHTLNGSGLAVGRTLVAVLENHQNADGSINIPAALQPYMGGVTKLEVK.

237–239 (TAE) contacts L-serine. Residue 268 to 270 (RSE) coordinates ATP. Residue Glu291 participates in L-serine binding. 355 to 358 (EISS) lines the ATP pocket. Ser390 provides a ligand contact to L-serine.

This sequence belongs to the class-II aminoacyl-tRNA synthetase family. Type-1 seryl-tRNA synthetase subfamily. As to quaternary structure, homodimer. The tRNA molecule binds across the dimer.

The protein resides in the cytoplasm. The catalysed reaction is tRNA(Ser) + L-serine + ATP = L-seryl-tRNA(Ser) + AMP + diphosphate + H(+). It carries out the reaction tRNA(Sec) + L-serine + ATP = L-seryl-tRNA(Sec) + AMP + diphosphate + H(+). It participates in aminoacyl-tRNA biosynthesis; selenocysteinyl-tRNA(Sec) biosynthesis; L-seryl-tRNA(Sec) from L-serine and tRNA(Sec): step 1/1. In terms of biological role, catalyzes the attachment of serine to tRNA(Ser). Is also able to aminoacylate tRNA(Sec) with serine, to form the misacylated tRNA L-seryl-tRNA(Sec), which will be further converted into selenocysteinyl-tRNA(Sec). This chain is Serine--tRNA ligase, found in Neisseria gonorrhoeae (strain ATCC 700825 / FA 1090).